The primary structure comprises 349 residues: Hydroxymethylglutaryl-CoA synthase (349 aa).

Residue Asp30 coordinates (3S)-3-hydroxy-3-methylglutaryl-CoA. Glu82 functions as the Proton donor/acceptor in the catalytic mechanism. Residue Cys114 participates in (3S)-3-hydroxy-3-methylglutaryl-CoA binding. Catalysis depends on Cys114, which acts as the Acyl-thioester intermediate. Arg203 contributes to the CoA binding site. (3S)-3-hydroxy-3-methylglutaryl-CoA is bound by residues Thr205 and His238. His238 acts as the Proton donor/acceptor in catalysis. A CoA-binding site is contributed by Lys243. (3S)-3-hydroxy-3-methylglutaryl-CoA is bound by residues Lys247, Asn270, and Ser300.

This sequence belongs to the thiolase-like superfamily. Archaeal HMG-CoA synthase family. In terms of assembly, interacts with acetoacetyl-CoA thiolase that catalyzes the precedent step in the pathway and with a DUF35 protein. The acetoacetyl-CoA thiolase/HMG-CoA synthase complex channels the intermediate via a fused CoA-binding site, which allows for efficient coupling of the endergonic thiolase reaction with the exergonic HMGCS reaction.

The enzyme catalyses acetoacetyl-CoA + acetyl-CoA + H2O = (3S)-3-hydroxy-3-methylglutaryl-CoA + CoA + H(+). The protein operates within metabolic intermediate biosynthesis; (R)-mevalonate biosynthesis; (R)-mevalonate from acetyl-CoA: step 2/3. Its function is as follows. Catalyzes the condensation of acetyl-CoA with acetoacetyl-CoA to form 3-hydroxy-3-methylglutaryl-CoA (HMG-CoA). Functions in the mevalonate (MVA) pathway leading to isopentenyl diphosphate (IPP), a key precursor for the biosynthesis of isoprenoid compounds that are building blocks of archaeal membrane lipids. In Methanothermococcus thermolithotrophicus (Methanococcus thermolithotrophicus), this protein is Hydroxymethylglutaryl-CoA synthase.